We begin with the raw amino-acid sequence, 455 residues long: Putative O-acetyltransferase SAT14 (455 aa).

This sequence belongs to the lysine N-acyltransferase MbtK family.

The protein operates within mycotoxin biosynthesis. Functionally, putative O-acetyltransferase; part of the satratoxin SC2 cluster involved in the biosynthesis of satratoxins, trichothecene mycotoxins that are associated with human food poisonings. Satratoxins are suggested to be made by products of multiple gene clusters (SC1, SC2 and SC3) that encode 21 proteins in all, including polyketide synthases, acetyltransferases, and other enzymes expected to modify the trichothecene skeleton. SC1 encodes 10 proteins, SAT1 to SAT10. The largest are SAT8, which encodes a putative polyketide synthase (PKS) with a conventional non-reducing architecture, and SAT10, a putative protein containing four ankyrin repeats and thus may be involved in protein scaffolding. The putative short-chain reductase SAT3 may assist the PKS in some capacity. SAT6 contains a secretory lipase domain and acts probably as a trichothecene esterase. SAT5 encodes a putative acetyltransferase, and so, with SAT6, may affect endogenous protection from toxicity. The probable transcription factor SAT9 may regulate the expression of the SC1 cluster. SC2 encodes proteins SAT11 to SAT16, the largest of which encodes the putative reducing PKS SAT13. SAT11 is a cytochrome P450 monooxygenase, while SAT14 and SAT16 are probable acetyltransferases. The SC2 cluster may be regulated by the transcription factor SAT15. SC3 is a small cluster that encodes 5 proteins, SAT17 to SAT21. SAT21 is a putative MFS-type transporter which may have a role in exporting secondary metabolites. The four other proteins putatively encoded in SC3 include the taurine hydroxylase-like protein SAT17, the O-methyltransferase SAT18, the acetyltransferase SAT19, and the Cys6-type zinc finger SAT20, the latter being probably involved in regulation of SC3 expression. This is Putative O-acetyltransferase SAT14 from Stachybotrys chartarum (strain CBS 109288 / IBT 7711) (Toxic black mold).